The chain runs to 827 residues: Probable beta-glucosidase H (827 aa).

Residue aspartate 223 is part of the active site. One can recognise a PA14 domain in the interval 387–546 (RLLTNAVMHF…DSAEMVRSAV (160 aa)). Asparagine 471, asparagine 594, asparagine 600, and asparagine 625 each carry an N-linked (GlcNAc...) asparagine glycan.

It belongs to the glycosyl hydrolase 3 family.

The protein resides in the secreted. It carries out the reaction Hydrolysis of terminal, non-reducing beta-D-glucosyl residues with release of beta-D-glucose.. Its pathway is glycan metabolism; cellulose degradation. Functionally, beta-glucosidases are one of a number of cellulolytic enzymes involved in the degradation of cellulosic biomass. Catalyzes the last step releasing glucose from the inhibitory cellobiose. This Aspergillus flavus (strain ATCC 200026 / FGSC A1120 / IAM 13836 / NRRL 3357 / JCM 12722 / SRRC 167) protein is Probable beta-glucosidase H (bglH).